Reading from the N-terminus, the 1002-residue chain is MVGCWVALALVLPMAVPSLAEMAQRHPVAVLPADAPSSVAVRQMAEAFHESGSENILVVLLTDEKGLGAADENVYHTLVDRLRNDAKDVVMLQDFLTTPPLREVLGSKDGKAWILPIGLAGDLGTPKSYHAYTDVERIVKRTVAGTTLTANVTGPAATVADLTDAGARDRASIELAIAVMLLVILMVIYRNPVTMLLPLVTIGASLMTAQALVAGVSLVGGLAVSNQAIVLLSAMIAGAGTDYAVFLISRYHEYVRLGEHPERAVQRAMMSVGKVIAASAATVGITFLGMRFAKLGVFSTVGPALAIGIAVSFLAAVTLLPAILVLASPRGWVAPRGERMATFWRRAGTRIVRRPKAYLGASLIGLVALASCASLAHFNYDDRKQLPPSDPSSVGYAAMEHHFSVNQTIPEYLIIHSAHDLRTPRGLADLEQLAQRVSQIPGVAMVRGVTRPNGETLEQARATYQAGQVGNRLGGASRMIDERTGDLNRLASGANLLADNLGDVRGQVSRAVAGVRSLVDALAYIQNQFGGNKTFNEIDNAARLVSNIHALGDALQVNFDGIANSFDWLDSVVAALDTSPVCDSNPMCGNARVQFHKLQTARDNGTLDKVVGLARQLQSTRSPQTVSAVVNDLGRSLNSVVRSLKSLGLDNPDAARARLISMQNGANDLASAGRQVADGVQMLVDQTKNMGIGLNQASAFLMAMGNDASQPSMAGFNVPPQVLKSEEFKKVAQAFISPDGHTVRYFIQTDLNPFSTAAMDQVNTIIDTAKGAQPNTSLADASISMSGYPVMLRDIRDYYERDMRLIVAVTVVVVILILMALLRAIVAPLYLVGSVVISYMSAIGLGVVVFQVFLGQELHWSVPGLAFVVLVAVGADYNMLLASRLRDESALGVRSSVIRTVRCTGGVITAAGLIFAASMSGLLFSSIGTVVQGGFIIGVGILIDTFVVRTITVPAMATLLGRASWWPGHPWQRCAPEEGQMSARMSARTKTVFQAVADGSKR.

The next 12 helical transmembrane spans lie at 1-21, 177-197, 199-219, 228-248, 268-288, 306-326, 358-378, 806-826, 835-855, 862-882, 901-921, and 923-943; these read MVGC…SLAE, IAVM…TMLL, LVTI…VSLV, AIVL…VFLI, AMMS…ITFL, AIGI…ILVL, YLGA…LAHF, IVAV…RAIV, VVIS…VFLG, VPGL…MLLA, VRCT…SMSG, and LFSS…GILI.

The protein belongs to the resistance-nodulation-cell division (RND) (TC 2.A.6) family. MmpL subfamily.

The protein localises to the cell membrane. In Mycobacterium bovis (strain ATCC BAA-935 / AF2122/97), this protein is Probable transport protein MmpL10 (mmpL10).